Consider the following 101-residue polypeptide: MAKLSLINREEKRRKTVEKFAAKRAALIAQINDFKLPEEERMVARLKLQQLPRNASPVRERNRCALTGRPRGVFRKFGLCRNKLRDLAFRGEVPGMTKASW.

Belongs to the universal ribosomal protein uS14 family. Part of the 30S ribosomal subunit. Contacts proteins S3 and S10.

In terms of biological role, binds 16S rRNA, required for the assembly of 30S particles and may also be responsible for determining the conformation of the 16S rRNA at the A site. This Aromatoleum aromaticum (strain DSM 19018 / LMG 30748 / EbN1) (Azoarcus sp. (strain EbN1)) protein is Small ribosomal subunit protein uS14.